Here is a 75-residue protein sequence, read N- to C-terminus: MSSGGLLLLLGLLTLWAELTPVSGQDRPVKPGLCPPRPQKPPCVKECKNDWSCRGEQKCCRYGCIYECRDPIFVK.

The signal sequence occupies residues 1 to 24 (MSSGGLLLLLGLLTLWAELTPVSG). The WAP domain occupies 27-72 (RPVKPGLCPPRPQKPPCVKECKNDWSCRGEQKCCRYGCIYECRDPI). 4 disulfides stabilise this stretch: Cys34–Cys60, Cys43–Cys64, Cys47–Cys59, and Cys53–Cys68.

Belongs to the venom waprin family. As to expression, expressed by the venom gland.

It is found in the secreted. In terms of biological role, damages membranes of susceptible bacteria. Has no hemolytic activity. Not toxic to mice. Does not inhibit the proteinases elastase and cathepsin G. In Cryptophis nigrescens (Eastern small-eyed snake), this protein is Nigwaprin-a.